Reading from the N-terminus, the 67-residue chain is Large ribosomal subunit protein bL35 (67 aa).

It belongs to the bacterial ribosomal protein bL35 family.

This Bartonella tribocorum (strain CIP 105476 / IBS 506) protein is Large ribosomal subunit protein bL35.